Consider the following 261-residue polypeptide: RING-H2 finger protein ATL58 (261 aa).

A helical transmembrane segment spans residues 25 to 45; sequence AFIFSVPICFTFIILFLFYLI. The segment at 100 to 142 adopts an RING-type; atypical zinc-finger fold; sequence CSVCLGDYQPNDKLQQIPVCKHTFHMDCIDLWLTSHTTCPLCR. Disordered stretches follow at residues 149-227 and 241-261; these read RSRQ…NDGH and MEED…CRTG. The segment covering 194–221 has biased composition (polar residues); that stretch reads SGVSSQPESQPVVNHRGVSSQPESQPVN.

Belongs to the RING-type zinc finger family. ATL subfamily.

It is found in the membrane. It carries out the reaction S-ubiquitinyl-[E2 ubiquitin-conjugating enzyme]-L-cysteine + [acceptor protein]-L-lysine = [E2 ubiquitin-conjugating enzyme]-L-cysteine + N(6)-ubiquitinyl-[acceptor protein]-L-lysine.. It functions in the pathway protein modification; protein ubiquitination. The chain is RING-H2 finger protein ATL58 (ATL58) from Arabidopsis thaliana (Mouse-ear cress).